The chain runs to 627 residues: Neuronal acetylcholine receptor subunit alpha-4 (627 aa).

A signal peptide spans 1–26; it reads MELGGPGAPRLLPPLLLLLGTGLLRA. At 27 to 249 the chain is on the extracellular side; the sequence is SSHVETRAHA…RRLPLFYTIN (223 aa). Asn-57 carries N-linked (GlcNAc...) asparagine glycosylation. Positions 76 and 78 each coordinate Ca(2+). Asn-107 and Asn-174 each carry an N-linked (GlcNAc...) asparagine glycan. Disulfide bonds link Cys-161–Cys-175 and Cys-225–Cys-226. Residues 250-269 form a helical membrane-spanning segment; it reads LIIPCLLISCLTVLVFYLPS. Cys-271 carries the S-palmitoyl cysteine lipid modification. 2 helical membrane passes run 275 to 291 and 306 to 330; these read ITLC…FLLL and IGEY…VLNV. The Cytoplasmic segment spans residues 331–600; that stretch reads HHRSPRTHTM…WKYVAMVIDR (270 aa). Disordered stretches follow at residues 382 to 481 and 496 to 561; these read PRFW…VEGG and DDAA…LPLS. At Ser-424 the chain carries Phosphoserine. A compositionally biased stretch (low complexity) spans 501 to 511; that stretch reads EADGQAAGALA. Phosphoserine is present on residues Ser-538 and Ser-541. The segment covering 538–548 has biased composition (polar residues); sequence SSVSPSATVKT. Residues 601–619 form a helical membrane-spanning segment; sequence IFLWMFIIVCLLGTVGLFL.

This sequence belongs to the ligand-gated ion channel (TC 1.A.9) family. Acetylcholine receptor (TC 1.A.9.1) subfamily. Alpha-4/CHRNA4 sub-subfamily. In terms of assembly, neuronal AChR is composed of two different types of subunits: alpha and beta. CHRNA4 forms heteropentameric neuronal acetylcholine receptors with CHRNB2 and CHRNB4, as well as CHRNA5 and CHRNB3 as accesory subunits. Found in two major stoichiometric forms, LS (low agonist sensitivity): (CHRNA4)3:(CHRNB2)2 and HS (high agonist sensitivity): (CHRNA4)2:(CHRNB2)3, the two stoichiometric forms differ in their unitary conductance, calcium permeability, ACh sensitivity and potentiation by divalent cation. Cells produce predominantly an (CHRNA4)3:(CHRNB2)2 nAChR. The (CHRNA4)2:(CHRNB2)3 expression is selectively up-regulated by nicotine and has lower single channel conductance and calcium permeability. In the striatum, also forms CHRNA4:CHRNA6:CHRNB2 complexes. Also found in the stoichiometric form: (CHRNA4:CHRNB2)2:CHRNB3. Interacts with RIC3; which is required for proper folding and assembly. Interacts with LYPD6.

The protein resides in the synaptic cell membrane. The protein localises to the cell membrane. The catalysed reaction is Ca(2+)(in) = Ca(2+)(out). It catalyses the reaction K(+)(in) = K(+)(out). The enzyme catalyses Na(+)(in) = Na(+)(out). Activated by a myriad of ligands such as acetylcholine, cytisine, nicotine, choline and epibatidine. Channel potentiation by calcium is stoichiometry-selective, CHRNA4:CHRNB2 nACh receptor is achieved by calcium association with topographically distinct sites framed by anionic residues within the CHRNA4 subunit and between the CHRNA4 and CHRNB2 subunits. nAChR activity is inhibited by the antagonist alpha-conotoxins BuIA, PnIA, GID and MII, small disulfide-constrained peptides from cone snails. In terms of biological role, component of neuronal acetylcholine receptors (nAChRs) that function as pentameric, ligand-gated cation channels with high calcium permeability among other activities. nAChRs are excitatory neurotrasnmitter receptors formed by a collection of nAChR subunits known to mediate synaptic transmission in the nervous system and the neuromuscular junction. Each nAchR subunit confers differential attributes to channel properties, including activation, deactivation and desensitization kinetics, pH sensitivity, cation permeability, and binding to allosteric modulators. CHRNA4 forms heteropentameric neuronal acetylcholine receptors with CHRNB2 and CHRNB4, as well as CHRNA5 and CHRNB3 as accesory subunits. Is the most abundant nAChR subtype expressed in the central nervous system. Found in two major stoichiometric forms,(CHRNA4)3:(CHRNB2)2 and (CHRNA4)2:(CHRNB2)3, the two stoichiometric forms differ in their unitary conductance, calcium permeability, ACh sensitivity and potentiation by divalent cation. Involved in the modulation of calcium-dependent signaling pathways, influences the release of neurotransmitters, including dopamine, glutamate and GABA. This chain is Neuronal acetylcholine receptor subunit alpha-4, found in Homo sapiens (Human).